Here is a 379-residue protein sequence, read N- to C-terminus: Mannitol-1-phosphate 5-dehydrogenase (379 aa).

NAD(+) is bound at residue 3–14; it reads AVHFGAGNIGRG.

This sequence belongs to the mannitol dehydrogenase family.

It carries out the reaction D-mannitol 1-phosphate + NAD(+) = beta-D-fructose 6-phosphate + NADH + H(+). This Anoxybacillus flavithermus (strain DSM 21510 / WK1) protein is Mannitol-1-phosphate 5-dehydrogenase.